The chain runs to 246 residues: tRNA (guanine-N(7)-)-methyltransferase (246 aa).

E77, E102, D129, and D152 together coordinate S-adenosyl-L-methionine. Residue D152 is part of the active site. Substrate is bound by residues K156, D188, and 225–228 (TKFE).

Belongs to the class I-like SAM-binding methyltransferase superfamily. TrmB family.

It carries out the reaction guanosine(46) in tRNA + S-adenosyl-L-methionine = N(7)-methylguanosine(46) in tRNA + S-adenosyl-L-homocysteine. It participates in tRNA modification; N(7)-methylguanine-tRNA biosynthesis. In terms of biological role, catalyzes the formation of N(7)-methylguanine at position 46 (m7G46) in tRNA. This chain is tRNA (guanine-N(7)-)-methyltransferase, found in Haemophilus influenzae (strain PittGG).